Here is a 534-residue protein sequence, read N- to C-terminus: Origin of replication complex subunit 5 (534 aa).

A disordered region spans residues 1-36; it reads MPPKEESSKVTRRSTRSSASVTVENSEPIESHTPTI. 83-90 contributes to the ATP binding site; it reads GGASTGKT. Residues 129-136 carry the Nuclear localization signal motif; sequence HRKCSLNG. Positions 397–428 are disordered; the sequence is MFDSTGGMDNRKRKRKASEKSMEKKEIAEQEA. Residues 414–424 show a composition bias toward basic and acidic residues; the sequence is SEKSMEKKEIA.

It belongs to the ORC5 family. In terms of assembly, component of the origin recognition complex (ORC) composed of at least ORC1 (ORC1A or ORC1B), ORC2, ORC3, ORC4, ORC5 and ORC6. ORC is regulated in a cell-cycle and development dependent manner. It is sequentially assembled at the exit from anaphase of mitosis and disassembled as cells enter S phase. Interacts directly with ORC1A, ORC1B, ORC2, ORC3, ORC4 and ORC6. As to expression, follow a cell-cycle regulation with a peak at the G1/S-phase. Mostly expressed in flower buds and cauline leaves, and, to a lower exent, in roots, leaves and stems. Expressed at low levels ubiquitously.

It localises to the nucleus. Component of the origin recognition complex (ORC) that binds origins of replication. DNA-binding is ATP-dependent. The specific DNA sequences that define origins of replication have not been identified yet. ORC is required to assemble the pre-replication complex necessary to initiate DNA replication. The sequence is that of Origin of replication complex subunit 5 from Arabidopsis thaliana (Mouse-ear cress).